A 433-amino-acid chain; its full sequence is Tubulin epsilon and delta complex protein 2 (433 aa).

3 disordered regions span residues 45 to 69, 95 to 169, and 326 to 345; these read TGTR…ACTP, TKAG…VGMG, and QPPR…SCGG. Residues 107 to 120 are compositionally biased toward polar residues; it reads KSRSIVTSSGTTAS. A Phosphoserine modification is found at Ser-159. A compositionally biased stretch (pro residues) spans 327–339; it reads PPRPCPVGRPPGA.

In terms of assembly, interacts with TEDC1. Found in a complex with TEDC1, TEDC2, TUBE1 and TUBD1.

The protein resides in the cell projection. The protein localises to the cilium. Its subcellular location is the cytoplasm. It is found in the cytoskeleton. It localises to the microtubule organizing center. The protein resides in the centrosome. The protein localises to the centriole. Acts as a positive regulator of ciliary hedgehog signaling. Required for centriole stability. This chain is Tubulin epsilon and delta complex protein 2, found in Homo sapiens (Human).